Reading from the N-terminus, the 507-residue chain is ATP synthase subunit alpha, chloroplastic (507 aa).

170 to 177 (GDRQTGKT) contacts ATP.

It belongs to the ATPase alpha/beta chains family. F-type ATPases have 2 components, CF(1) - the catalytic core - and CF(0) - the membrane proton channel. CF(1) has five subunits: alpha(3), beta(3), gamma(1), delta(1), epsilon(1). CF(0) has four main subunits: a, b, b' and c.

Its subcellular location is the plastid. The protein localises to the chloroplast thylakoid membrane. It catalyses the reaction ATP + H2O + 4 H(+)(in) = ADP + phosphate + 5 H(+)(out). Produces ATP from ADP in the presence of a proton gradient across the membrane. The alpha chain is a regulatory subunit. The sequence is that of ATP synthase subunit alpha, chloroplastic from Nicotiana tabacum (Common tobacco).